The primary structure comprises 676 residues: Ribosome quality control complex subunit TCF25 (676 aa).

Disordered regions lie at residues 1–59 (MSRR…VRVN) and 85–147 (LTDA…ENGL). Residues 123 to 136 (GKLRKKKKKQKNKK) show a composition bias toward basic residues. Phosphoserine is present on Ser602.

It belongs to the TCF25 family. As to quaternary structure, component of the ribosome quality control complex (RQC), composed of the E3 ubiquitin ligase LTN1, TCF25 and NEMF associated with the 60S ribosomal subunit. Interacts (via C-terminus) with NFATC4; the interaction leads to suppresson of NFATC4 transcription factor activity and is reduced following stimulation with angiotensin-2. Interacts with XIAP. As to expression, in the embryo, widely expressed with highest levels in brain. In the adult, highest expression is found in the heart. Repressed in cardiac tissue of patients with heart failure (at protein level). mRNA levels in the heart are unchanged in patients with heart failure.

It is found in the nucleus. Its subcellular location is the cytoplasm. It localises to the cytosol. Component of the ribosome quality control complex (RQC), a ribosome-associated complex that mediates ubiquitination and extraction of incompletely synthesized nascent chains for proteasomal degradation. In the RQC complex, required to promote formation of 'Lys-48'-linked polyubiquitin chains during ubiquitination of incompletely synthesized proteins by LTN1. May negatively regulate the calcineurin-NFAT signaling cascade by suppressing the activity of transcription factor NFATC4. May play a role in cell death control. In Homo sapiens (Human), this protein is Ribosome quality control complex subunit TCF25.